Consider the following 131-residue polypeptide: ATP synthase epsilon chain (131 aa).

This sequence belongs to the ATPase epsilon chain family. In terms of assembly, F-type ATPases have 2 components, CF(1) - the catalytic core - and CF(0) - the membrane proton channel. CF(1) has five subunits: alpha(3), beta(3), gamma(1), delta(1), epsilon(1). CF(0) has three main subunits: a, b and c.

It is found in the cell membrane. Produces ATP from ADP in the presence of a proton gradient across the membrane. This is ATP synthase epsilon chain from Bacillus licheniformis (strain ATCC 14580 / DSM 13 / JCM 2505 / CCUG 7422 / NBRC 12200 / NCIMB 9375 / NCTC 10341 / NRRL NRS-1264 / Gibson 46).